A 298-amino-acid chain; its full sequence is Multifunctional dioxygenase ausE (298 aa).

The substrate site is built by arginine 72 and glutamine 127. Fe cation-binding residues include histidine 130 and aspartate 132. Threonine 167 is a substrate binding site. A Fe cation-binding site is contributed by histidine 214. A substrate-binding site is contributed by arginine 226.

Belongs to the PhyH family. In terms of assembly, homodimer. The cofactor is Fe cation.

It catalyses the reaction preaustinoid A1 + 2-oxoglutarate + O2 = preaustinoid A2 + succinate + CO2 + H2O. It carries out the reaction preaustinoid A2 + 2-oxoglutarate + O2 = preaustinoid A3 + succinate + CO2 + H2O. The enzyme catalyses berkeleyone A + 2-oxoglutarate + O2 = preaustinoid A + succinate + CO2 + H2O. Its pathway is secondary metabolite biosynthesis; terpenoid biosynthesis. Its function is as follows. Multifunctional dioxygenase; part of the gene cluster B that mediates the biosynthesis of austinol and dehydroaustinol, two fungal meroterpenoids. The first step of the pathway is the synthesis of 3,5-dimethylorsellinic acid by the polyketide synthase ausA. 3,5-dimethylorsellinic acid is then prenylated by the polyprenyl transferase ausN. Further epoxidation by the FAD-dependent monooxygenase ausM and cyclization by the probable terpene cyclase ausL lead to the formation of protoaustinoid A. Protoaustinoid A is then oxidized to spiro-lactone preaustinoid A3 by the combined action of the FAD-binding monooxygenases ausB and ausC, and the dioxygenase ausE. Acid-catalyzed keto-rearrangement and ring contraction of the tetraketide portion of preaustinoid A3 by ausJ lead to the formation of preaustinoid A4. The aldo-keto reductase ausK, with the help of ausH, is involved in the next step by transforming preaustinoid A4 into isoaustinone which is in turn hydroxylated by the P450 monooxygenase ausI to form austinolide. Finally, the cytochrome P450 monooxygenase ausG modifies austinolide to austinol. Austinol can be further modified to dehydroaustinol which forms a diffusible complex with diorcinol that initiates conidiation. Due to genetic rearrangements of the clusters and the subsequent loss of some enzymes, the end products of the Emericella nidulans austinoid biosynthesis clusters are austinol and dehydroaustinol, even if additional enzymes, such as the O-acetyltransferase ausQ and the cytochrome P450 monooxygenase ausR are still functional. The sequence is that of Multifunctional dioxygenase ausE from Emericella nidulans (strain FGSC A4 / ATCC 38163 / CBS 112.46 / NRRL 194 / M139) (Aspergillus nidulans).